The chain runs to 123 residues: Large ribosomal subunit protein bL12 (123 aa).

It belongs to the bacterial ribosomal protein bL12 family. In terms of assembly, homodimer. Part of the ribosomal stalk of the 50S ribosomal subunit. Forms a multimeric L10(L12)X complex, where L10 forms an elongated spine to which 2 to 4 L12 dimers bind in a sequential fashion. Binds GTP-bound translation factors.

Functionally, forms part of the ribosomal stalk which helps the ribosome interact with GTP-bound translation factors. Is thus essential for accurate translation. The polypeptide is Large ribosomal subunit protein bL12 (Shewanella sp. (strain MR-4)).